The sequence spans 376 residues: tRNA-specific 2-thiouridylase MnmA (376 aa).

Residues 19 to 26 (GMSGGVDS) and Met-45 each bind ATP. The segment at 105 to 107 (NPD) is interaction with target base in tRNA. Residue Cys-110 is the Nucleophile of the active site. Cysteines 110 and 210 form a disulfide. ATP is bound at residue Gly-134. The segment at 160-162 (KDQ) is interaction with tRNA. Cys-210 (cysteine persulfide intermediate) is an active-site residue. An interaction with tRNA region spans residues 326-327 (RY).

It belongs to the MnmA/TRMU family.

It localises to the cytoplasm. The catalysed reaction is S-sulfanyl-L-cysteinyl-[protein] + uridine(34) in tRNA + AH2 + ATP = 2-thiouridine(34) in tRNA + L-cysteinyl-[protein] + A + AMP + diphosphate + H(+). Functionally, catalyzes the 2-thiolation of uridine at the wobble position (U34) of tRNA, leading to the formation of s(2)U34. The protein is tRNA-specific 2-thiouridylase MnmA of Bordetella petrii (strain ATCC BAA-461 / DSM 12804 / CCUG 43448).